The sequence spans 74 residues: Serine rich endogenous peptide 16 (74 aa).

The N-terminal stretch at methionine 1–alanine 31 is a signal peptide. The disordered stretch occupies residues threonine 29–proline 74. Residues proline 42 to tyrosine 62 show a composition bias toward pro residues. The short motif at arginine 60–proline 74 is the SCOOP motif element. The SxS motif essential for MIK2 binding motif lies at serine 66–serine 68.

It belongs to the serine rich endogenous peptide (SCOOP) phytocytokine family. In terms of assembly, interacts with MIK2 (via extracellular leucine-rich repeat domain); this interaction triggers the formation of complex between MIK2 and the BAK1/SERK3 and SERK4 coreceptors, and subsequent BAK1 activation by phosphorylation.

It is found in the cell membrane. It localises to the secreted. The protein localises to the extracellular space. Its subcellular location is the apoplast. Brassicaceae-specific phytocytokine (plant endogenous peptide released into the apoplast) perceived by MIK2 in a BAK1/SERK3 and SERK4 coreceptors-dependent manner, that modulates various physiological and antimicrobial processes including growth prevention and reactive oxygen species (ROS) response regulation. The polypeptide is Serine rich endogenous peptide 16 (Arabidopsis thaliana (Mouse-ear cress)).